Consider the following 182-residue polypeptide: CDP-diacylglycerol--glycerol-3-phosphate 3-phosphatidyltransferase (182 aa).

The Cytoplasmic segment spans residues 1–12; the sequence is MQLNIPTWLTLF. The helical transmembrane segment at 13 to 37 threads the bilayer; sequence RVVMIPFFVLAFYLPFKWAPLCCAL. Residues 38–60 are Periplasmic-facing; it reads IFVLAAVTDWFDGFLARRWKQTT. The helical transmembrane segment at 61-81 threads the bilayer; the sequence is RFGAFLDPVADKVMVAMALVL. At 82-86 the chain is on the cytoplasmic side; sequence VAEHF. A helical membrane pass occupies residues 87 to 107; the sequence is HSWWITLPAATMIAREIIISA. The Periplasmic segment spans residues 108 to 145; the sequence is LREWMAEIGKRSSVAVSWIGKVKTTAQMLALVTLLWRP. A helical transmembrane segment spans residues 146–168; sequence DDIVSGIGIAALYVAAVLTFWSM. At 169-181 the chain is on the cytoplasmic side; sequence FQYLYAARHDLFE.

This sequence belongs to the CDP-alcohol phosphatidyltransferase class-I family.

The protein resides in the cell inner membrane. It carries out the reaction a CDP-1,2-diacyl-sn-glycerol + sn-glycerol 3-phosphate = a 1,2-diacyl-sn-glycero-3-phospho-(1'-sn-glycero-3'-phosphate) + CMP + H(+). The protein operates within phospholipid metabolism; phosphatidylglycerol biosynthesis; phosphatidylglycerol from CDP-diacylglycerol: step 1/2. In terms of biological role, catalyzes the conversion of cytidine diphosphate diacylglycerol (CDP-DG) and glycerol 3-phosphate into phosphatidylglycerol. Essential for the synthesis of anionic phospholipids, thereby playing a role in balancing the ratio of zwitterionic and anionic phospholipids, which is thought to be important for normal membrane function. This Sodalis glossinidius (strain morsitans) protein is CDP-diacylglycerol--glycerol-3-phosphate 3-phosphatidyltransferase.